Reading from the N-terminus, the 131-residue chain is Global transcriptional regulator Spx (131 aa).

Residues cysteine 10 and cysteine 13 are joined by a disulfide bond.

It belongs to the ArsC family. Spx subfamily. Interacts with the C-terminal domain of the alpha subunit of the RNAP.

The protein localises to the cytoplasm. Functionally, global transcriptional regulator that plays a key role in stress response and exerts either positive or negative regulation of genes. Acts by interacting with the C-terminal domain of the alpha subunit of the RNA polymerase (RNAP). This interaction can enhance binding of RNAP to the promoter region of target genes and stimulate their transcription, or block interaction of RNAP with activator. The protein is Global transcriptional regulator Spx of Staphylococcus haemolyticus (strain JCSC1435).